The sequence spans 614 residues: Chaperone protein DnaK (614 aa).

T176 is modified (phosphothreonine; by autocatalysis). A disordered region spans residues 576 to 614 (YQQQQSQGGEAGAANGDASKKDDNTVDGDFHEVHDDDKK). Low complexity predominate over residues 577-589 (QQQQSQGGEAGAA). A compositionally biased stretch (basic and acidic residues) spans 593-614 (ASKKDDNTVDGDFHEVHDDDKK).

This sequence belongs to the heat shock protein 70 family.

Its function is as follows. Acts as a chaperone. The polypeptide is Chaperone protein DnaK (Fructilactobacillus sanfranciscensis (Lactobacillus sanfranciscensis)).